Reading from the N-terminus, the 191-residue chain is GDP-mannose pyrophosphatase (191 aa).

Residues Y17, 38–40 (KRE), R67, and 85–87 (AGL) each bind GDP-alpha-D-mannose. Residues 43–180 (DRGNGAAVLL…VIRDAKTVLL (138 aa)) enclose the Nudix hydrolase domain. Residues A85, E100, and E104 each contribute to the Mg(2+) site. The Nudix box signature appears at 86-106 (GLLDDDEPEVCIRKEAIEETG). GDP-alpha-D-mannose contacts are provided by residues E104, E127, 150–151 (DE), and K176. Mg(2+) is bound at residue E151.

This sequence belongs to the Nudix hydrolase family. NudK subfamily. In terms of assembly, homodimer. Mg(2+) is required as a cofactor.

The enzyme catalyses GDP-alpha-D-mannose + H2O = alpha-D-mannose 1-phosphate + GMP + 2 H(+). In terms of biological role, nucleoside diphosphate sugar hydrolase that hydrolyzes GDP-mannose as its preferred substrate, yielding GMP and mannose-1-phosphate. In Cronobacter sakazakii (strain ATCC BAA-894) (Enterobacter sakazakii), this protein is GDP-mannose pyrophosphatase (nudK).